A 393-amino-acid chain; its full sequence is Acetyl-CoA acetyltransferase (393 aa).

The Acyl-thioester intermediate role is filled by cysteine 88. Residues histidine 349 and cysteine 379 each act as proton acceptor in the active site.

This sequence belongs to the thiolase-like superfamily. Thiolase family.

The protein localises to the cytoplasm. The catalysed reaction is 2 acetyl-CoA = acetoacetyl-CoA + CoA. The protein operates within metabolic intermediate biosynthesis; (R)-mevalonate biosynthesis; (R)-mevalonate from acetyl-CoA: step 1/3. In Pseudomonas aeruginosa (strain ATCC 15692 / DSM 22644 / CIP 104116 / JCM 14847 / LMG 12228 / 1C / PRS 101 / PAO1), this protein is Acetyl-CoA acetyltransferase (atoB).